Here is a 206-residue protein sequence, read N- to C-terminus: Large ribosomal subunit protein mL40 (206 aa).

The transit peptide at 1-46 directs the protein to the mitochondrion; it reads MATGVMLCAARALRPRSWIPGTCQAHVRHTHQRASLLAFWDLIPMR. Positions 170–189 are disordered; the sequence is PFEKEGPHYTPPISNYQAPE.

This sequence belongs to the mitochondrion-specific ribosomal protein mL40 family. As to quaternary structure, component of the mitochondrial ribosome large subunit (39S) which comprises a 16S rRNA and about 50 distinct proteins. As to expression, ubiquitous.

The protein localises to the mitochondrion. The polypeptide is Large ribosomal subunit protein mL40 (Mrpl40) (Mus musculus (Mouse)).